The chain runs to 1257 residues: MMCEVMPTINEDTPMSQRGSQSSGSDSDSHFEQLMVNMLDERDRLLDTLRETQESLSLAQQRLQDVIYDRDSLQRQLNSALPQDIESLTGGLAGSKGADPPEFAALTKELNACREQLLEKEEEISELKAERNNTRLLLEHLECLVSRHERSLRMTVVKRQAQSPSGVSSEVEVLKALKSLFEHHKALDEKVRERLRVSLERVSALEEELAAANQEIVALREQNVHIQRKMASSEGSTESEHLEGMEPGQKVHEKRLSNGSIDSTDETSQIVELQELLEKQNYEMAQMKERLAALSSRVGEVEQEAETARKDLIKTEEMNTKYQRDIREAMAQKEDMEERITTLEKRYLSAQRESTSIHDMNDKLENELANKEAILRQMEEKNRQLQERLELAEQKLQQTMRKAETLPEVEAELAQRIAALTKAEERHGNIEERMRHLEGQLEEKNQELQRARQREKMNEEHNKRLSDTVDRLLTESNERLQLHLKERMAALEEKNVLIQESETFRKNLEESLHDKERLAEEIEKLRSELDQLKMRTGSLIEPTIPRTHLDTSAELRYSVGSLVDSQSDYRTTKVIRRPRRGRMGVRRDEPKVKSLGDHEWNRTQQIGVLSSHPFESDTEMSDIDDDDRETIFSSMDLLSPSGHSDAQTLAMMLQEQLDAINKEIRLIQEEKESTELRAEEIENRVASVSLEGLNLARVHPGTSITASVTASSLASSSPPSGHSTPKLTPRSPAREMDRMGVMTLPSDLRKHRRKIAVVEEDGREDKATIKCETSPPPTPRALRMTHTLPSSYHNDARSSLSVSLEPESLGLGSANSSQDSLHKAPKKKGIKSSIGRLFGKKEKARLGQLRGFMETEAAAQESLGLGKLGTQAEKDRRLKKKHELLEEARRKGLPFAQWDGPTVVAWLELWLGMPAWYVAACRANVKSGAIMSALSDTEIQREIGISNPLHRLKLRLAIQEMVSLTSPSAPPTSRTPSGNVWVTHEEMENLAAPAKTKESEEGSWAQCPVFLQTLAYGDMNHEWIGNEWLPSLGLPQYRSYFMECLVDARMLDHLTKKDLRVHLKMVDSFHRTSLQYGIMCLKRLNYDRKELERRREASQHEIKDVLVWSNDRVIRWIQAIGLREYANNILESGVHGSLIALDENFDYSSLALLLQIPTQNTQARQILEREYNNLLALGTERRLDESDDKNFRRGSTWRRQFPPREVHGISMMPGSSETLPAGFRLTTTSGQSRKMTTDVASSRLQRLDNSTVRTYSC.

Disordered stretches follow at residues M1 to S29, A231 to D265, and E438 to K463. Residues S16 to D26 show a composition bias toward low complexity. Coiled-coil stretches lie at residues S29–M154, K185–E541, and H643–L695. S236 bears the Phosphoserine mark. Residue T237 is modified to Phosphothreonine. The span at E238–L256 shows a compositional bias: basic and acidic residues. A Phosphoserine modification is found at S239. Phosphoserine is present on residues S687 and S689. 2 stretches are compositionally biased toward low complexity: residues T709–P725 and S798–S813. Disordered stretches follow at residues T709 to R738 and S790 to I834. S817 and S820 each carry phosphoserine. 3 consecutive SAM domains span residues W898–L964, N1020–L1084, and W1108–L1177. Residues L1081–V1107 are a coiled coil.

This sequence belongs to the liprin family. Liprin-alpha subfamily. In terms of assembly, forms homodimers and heterodimers with liprins-alpha and liprins-beta. Interacts with the second PTPase domain of PTPRD, PTPRF and PTPRS. Interacts with KIF1A; the interaction decreases in presence of calcium. As to expression, expressed only in brain.

Its subcellular location is the cytoplasm. The protein localises to the cell surface. The protein resides in the cell projection. It localises to the dendritic spine. Functionally, alters PTPRF cellular localization and induces PTPRF clustering. May regulate the disassembly of focal adhesions. May localize receptor-like tyrosine phosphatases type 2A at specific sites on the plasma membrane, possibly regulating their interaction with the extracellular environment and their association with substrates. In neuronal cells, is a scaffolding protein in the dendritic spines which acts as immobile postsynaptic post able to recruit KIF1A-driven dense core vesicles to dendritic spines. The polypeptide is Liprin-alpha-2 (PPFIA2) (Homo sapiens (Human)).